A 154-amino-acid polypeptide reads, in one-letter code: Ribonuclease HI (154 aa).

The RNase H type-1 domain maps to 1 to 142; sequence MPKQIEIFTD…CDELAKKGAE (142 aa). Residues Asp-10, Glu-48, Asp-70, and Asp-134 each coordinate Mg(2+).

This sequence belongs to the RNase H family. As to quaternary structure, monomer. Requires Mg(2+) as cofactor.

Its subcellular location is the cytoplasm. The catalysed reaction is Endonucleolytic cleavage to 5'-phosphomonoester.. In terms of biological role, endonuclease that specifically degrades the RNA of RNA-DNA hybrids. The chain is Ribonuclease HI (rnhA) from Haemophilus influenzae (strain ATCC 51907 / DSM 11121 / KW20 / Rd).